Consider the following 699-residue polypeptide: Elongation factor G (699 aa).

In terms of domain architecture, tr-type G spans 8–283; the sequence is EHIRNIGICA…AVVDFLPSPI (276 aa). GTP is bound by residues 17 to 24, 81 to 85, and 135 to 138; these read AHIDAGKT, DTPGH, and NKMD.

It belongs to the TRAFAC class translation factor GTPase superfamily. Classic translation factor GTPase family. EF-G/EF-2 subfamily.

It is found in the cytoplasm. In terms of biological role, catalyzes the GTP-dependent ribosomal translocation step during translation elongation. During this step, the ribosome changes from the pre-translocational (PRE) to the post-translocational (POST) state as the newly formed A-site-bound peptidyl-tRNA and P-site-bound deacylated tRNA move to the P and E sites, respectively. Catalyzes the coordinated movement of the two tRNA molecules, the mRNA and conformational changes in the ribosome. The polypeptide is Elongation factor G (Rickettsia helvetica).